Consider the following 420-residue polypeptide: MKIYLVGGAVRDQLLNLVVKDRDWVVVGATPDDLLSQGYQQVGKDFPVFLHPQTKEEYALARTERKAGSGYTGFICDFSPTISLEQDLSRRDLTINALAQDLDGKIYDFYGGLTDLKQRLLRHVSPAFAEDPLRVLRVARFAARYHALGFTIASETRELMQQLSQSGELSNLTAERVWLETEKALLEPHPEVYFQTLQEVGALQVLFPELAALQGVPNPAKYHPEIDTFVHTMLVLQQAVLLTENTDSDKSAVRFAAICHDLGKALTPKEILPHHYGHEKAGVMPTRRLCQRFKLPHAIQDFAELCCEYHSHIHKAFELRAETILKLFNRLDVWRKPERFKALLLVCIADTRGRTGFEQVDYPQREFLWQLYQSALQVNVQDIIQQGFQQQAIRDELNRRRIIAIKQTRAEILPRFTNPC.

The ATP site is built by glycine 8 and arginine 11. Residues glycine 8 and arginine 11 each contribute to the CTP site. 2 residues coordinate Mg(2+): aspartate 21 and aspartate 23. 3 residues coordinate ATP: arginine 91, arginine 137, and arginine 140. Arginine 91, arginine 137, and arginine 140 together coordinate CTP. In terms of domain architecture, HD spans 228–334 (TFVHTMLVLQ…LKLFNRLDVW (107 aa)).

It belongs to the tRNA nucleotidyltransferase/poly(A) polymerase family. Bacterial CCA-adding enzyme type 1 subfamily. In terms of assembly, monomer. Can also form homodimers and oligomers. The cofactor is Mg(2+). Requires Ni(2+) as cofactor.

It carries out the reaction a tRNA precursor + 2 CTP + ATP = a tRNA with a 3' CCA end + 3 diphosphate. It catalyses the reaction a tRNA with a 3' CCA end + 2 CTP + ATP = a tRNA with a 3' CCACCA end + 3 diphosphate. Functionally, catalyzes the addition and repair of the essential 3'-terminal CCA sequence in tRNAs without using a nucleic acid template. Adds these three nucleotides in the order of C, C, and A to the tRNA nucleotide-73, using CTP and ATP as substrates and producing inorganic pyrophosphate. tRNA 3'-terminal CCA addition is required both for tRNA processing and repair. Also involved in tRNA surveillance by mediating tandem CCA addition to generate a CCACCA at the 3' terminus of unstable tRNAs. While stable tRNAs receive only 3'-terminal CCA, unstable tRNAs are marked with CCACCA and rapidly degraded. In Pasteurella multocida (strain Pm70), this protein is Multifunctional CCA protein.